The following is a 108-amino-acid chain: Protein YcgL (108 aa).

Residues 12–96 (MFCVIYRSSK…PPEDLLKQHL (85 aa)) form the YcgL domain.

The chain is Protein YcgL from Escherichia coli O9:H4 (strain HS).